A 154-amino-acid chain; its full sequence is 6,7-dimethyl-8-ribityllumazine synthase (154 aa).

5-amino-6-(D-ribitylamino)uracil contacts are provided by residues F22, 56 to 58 (AFE), and 80 to 82 (TVI). 85-86 (AT) contacts (2S)-2-hydroxy-3-oxobutyl phosphate. H88 (proton donor) is an active-site residue. 5-amino-6-(D-ribitylamino)uracil is bound at residue F113. A (2S)-2-hydroxy-3-oxobutyl phosphate-binding site is contributed by R127.

It belongs to the DMRL synthase family. In terms of assembly, forms an icosahedral capsid composed of 60 subunits, arranged as a dodecamer of pentamers.

It catalyses the reaction (2S)-2-hydroxy-3-oxobutyl phosphate + 5-amino-6-(D-ribitylamino)uracil = 6,7-dimethyl-8-(1-D-ribityl)lumazine + phosphate + 2 H2O + H(+). It functions in the pathway cofactor biosynthesis; riboflavin biosynthesis; riboflavin from 2-hydroxy-3-oxobutyl phosphate and 5-amino-6-(D-ribitylamino)uracil: step 1/2. Its function is as follows. Catalyzes the formation of 6,7-dimethyl-8-ribityllumazine by condensation of 5-amino-6-(D-ribitylamino)uracil with 3,4-dihydroxy-2-butanone 4-phosphate. This is the penultimate step in the biosynthesis of riboflavin. This Bacillus amyloliquefaciens (Bacillus velezensis) protein is 6,7-dimethyl-8-ribityllumazine synthase.